The following is a 276-amino-acid chain: MTTICTLLKDSQLPDSPSARLDTELLLAAAMGKPRSFLRTWPERIVPREANERFDDWIARRRNGEPVAYILGHQGFWSLDLEVAPHTLIPRPDTELLVETALATLAADTATVLDLGTGTGAIALALASERPLWTVTAVDRVEEAVALAERNRQRLLLENVEVRRSHWFSALDGRRFRMIVGNPPYIPASDPHLSEGDVRFEPKSALVAGSDGLDDIRQIVAQAPRHLLDEGWLLLEHGYDQGAAVRELLGARGFAGVHTLRDLGGNERITLGQWAC.

Residues 116-120 (GTGTG), Asp139, Trp167, and Asn182 contribute to the S-adenosyl-L-methionine site. 182 to 185 (NPPY) is a binding site for substrate.

This sequence belongs to the protein N5-glutamine methyltransferase family. PrmC subfamily.

The enzyme catalyses L-glutaminyl-[peptide chain release factor] + S-adenosyl-L-methionine = N(5)-methyl-L-glutaminyl-[peptide chain release factor] + S-adenosyl-L-homocysteine + H(+). In terms of biological role, methylates the class 1 translation termination release factors RF1/PrfA and RF2/PrfB on the glutamine residue of the universally conserved GGQ motif. The sequence is that of Release factor glutamine methyltransferase from Pseudomonas aeruginosa (strain ATCC 15692 / DSM 22644 / CIP 104116 / JCM 14847 / LMG 12228 / 1C / PRS 101 / PAO1).